Here is a 738-residue protein sequence, read N- to C-terminus: MSKSTAEIRQAFLDFFHSKGHQVVSSSTLVPNNDPTLLFTNAGMNQFKDVFLGLDKRAYSRATTSQRCVRAGGKHNDLENVGYTARHHTFFEMLGNFSFGDYFKHDAINFAWELLTSEQWFNLPKEKLWVTVYETDDEAYNIWANEVGVPHERIIRIGDNKGGAFASDNFWQMGDTGPCGPCSEIFFDHGDHIWGGPPGSAEEDGDRYIEIWNIVFMQFNRQSDGTMLPLPKPSVDTGMGLERIAAVLQHVNSNYEIDLFRDLIAAVADVTGATDLSSKSLRVIADHIRSCAFLISDGVIPSNENRGYVLRRIIRRAIRHGNMLGAKETFFYKLVAPLIAVMGPAAAELKQQQAMVEQVLKTEEEQFARTLERGLALLDDELSKLTGDTLDGETAFRLYDTYGFPVDLTADVCRERNLKVDEAGFEQAMEAQRRRARESSGFGADYNSLIRVDSASQFSGYDHVQQHATVTALFRNGEAVDEIHAGEEAVVVLNRTPFYGESGGQVGDKGELKNATATFSVTDTQKYGQAIGHVGILTTGTLRVNHSVEALVDVVRRNRIRLNHSATHLLHAALRNVLGEHVAQKGSLVNDKYLRFDFSHFEAMKPEQIRLVEDLVNEQIRRNMPVQTEVMELDAAKEKGAMALFGEKYDDQVRVLTMGDFSTELCGGTHASRTGDIGLFRILTESGSNLPGCTILRNLAIAGFSAFGSRKLSKRASEPSGRKFEPSVARQRCFSNGP.

Zn(2+)-binding residues include histidine 564, histidine 568, cysteine 666, and histidine 670.

The protein belongs to the class-II aminoacyl-tRNA synthetase family. Homotetramer. It depends on Zn(2+) as a cofactor.

It localises to the cytoplasm. It catalyses the reaction tRNA(Ala) + L-alanine + ATP = L-alanyl-tRNA(Ala) + AMP + diphosphate. In terms of biological role, catalyzes the attachment of alanine to tRNA(Ala) in a two-step reaction: alanine is first activated by ATP to form Ala-AMP and then transferred to the acceptor end of tRNA(Ala). Also edits incorrectly charged Ser-tRNA(Ala) and Gly-tRNA(Ala) via its editing domain. The chain is Alanine--tRNA ligase (alaS) from Yersinia pestis bv. Antiqua (strain Antiqua).